The primary structure comprises 354 residues: MATRYWIAALPVADDNVAAGKTALWARLQEAISRHSFDTPLYRFTVPDLRPGTLDSLLALSDDLVKSNIFIEGVSHKIRRQIEDLERAGGVEPGTLTVDGVPVDSYLTRFVWDEGKYPVNAPLKETVASIQSQVAKIEDDMKVRVAEYGNVKSQLGAINRKQTGSLAVRDLSNLIKPEDMVTSEHLVTLLSIVPKYSQKDWLASYESLDTFVVPRSSKKLYEDNEYALYTVTLFAKVVDNFKVHAREKGFQIRDFEYSPEAQESRKQELEKLLQDQEVMRTSPIAMGAMLATVRVFSSWDAFSSAVRVFVESILRYGSACTVPVCCPSTIYKEREKSKEHLGRAMRQYQQLLEI.

It belongs to the V-ATPase C subunit family. In terms of assembly, V-ATPase is a heteromultimeric enzyme composed of a peripheral catalytic V1 complex (components A to H) attached to an integral membrane V0 proton pore complex (components: a, c, c', c'' and d).

Its subcellular location is the vacuole membrane. Subunit of the peripheral V1 complex of vacuolar ATPase. Subunit C is necessary for the assembly of the catalytic sector of the enzyme and is likely to have a specific function in its catalytic activity. V-ATPase is responsible for acidifying a variety of intracellular compartments in eukaryotic cells. The protein is V-type proton ATPase subunit C (VATC) of Hordeum vulgare (Barley).